Reading from the N-terminus, the 510-residue chain is Probable sphingolipid transporter spinster homolog 3 (510 aa).

A helical membrane pass occupies residues 44-64 (SSLSPVWLLVIFCIINLLNYM). 2 N-linked (GlcNAc...) asparagine glycosylation sites follow: N75 and N98. 11 helical membrane-spanning segments follow: residues 106 to 126 (VLSS…ASLA), 136 to 156 (VWTI…IVLC), 158 to 178 (MFVG…IDDN), 185 to 205 (AAWL…GYVY), 219 to 239 (FWGE…MKPL), 298 to 318 (VFVV…AYSY), 336 to 356 (IFGA…GFIL), 369 to 387 (LLSG…AFTL), 392 to 414 (GFIA…VNYV), 430 to 450 (ISTV…VGIV), and 462 to 482 (LILT…KINL).

Belongs to the major facilitator superfamily. Spinster (TC 2.A.1.49) family.

The protein resides in the mitochondrion inner membrane. Its function is as follows. Probable sphingolipid transporter. This chain is Probable sphingolipid transporter spinster homolog 3, found in Arabidopsis thaliana (Mouse-ear cress).